Reading from the N-terminus, the 302-residue chain is uncharacterized protein (302 aa).

The region spanning 1–60 is the HTH lysR-type domain; sequence MRMNMSDFATFFAVARNQSFRAAGDELGLSSSAISHSIKTLEQRLKIRLFNRTTRSVSLT. Positions 20–40 form a DNA-binding region, H-T-H motif; sequence FRAAGDELGLSSSAISHSIKT.

Belongs to the LysR transcriptional regulatory family.

This is an uncharacterized protein from Escherichia coli (strain K12).